Reading from the N-terminus, the 274-residue chain is Nickel/cobalt efflux system RcnA (274 aa).

The Periplasmic segment spans residues 1–12 (MTEFTTLLQQGN). Residues 13–33 (AWFFIPSAILLGALHGLEPGH) form a helical membrane-spanning segment. The Cytoplasmic segment spans residues 34–56 (SKTMMAAFIIAIKGTIKQAVMLG). A helical membrane pass occupies residues 57–77 (LAATISHTAVVWLIAFGGMVI). Over 78–86 (SKRFTAQSA) the chain is Periplasmic. A helical transmembrane segment spans residues 87 to 107 (EPWLQLISAVIIISTAFWMFW). The Cytoplasmic segment spans residues 108 to 175 (RTWRGERNWL…DGREVTNWQI (68 aa)). A disordered region spans residues 127–153 (HHHHDHEHHHDHGHHHHHEHGEYQDAH). Positions 129-144 (HHDHEHHHDHGHHHHH) are enriched in basic residues. Residues 176–196 (LLFGLTGGLIPCPAAITVLLI) traverse the membrane as a helical segment. Over 197 to 209 (CIQLKALTLGATL) the chain is Periplasmic. A helical membrane pass occupies residues 210–230 (VVSFSIGLALTLVTVGVGAAI). Residues 231 to 251 (SVQQVAKRWSGFNTLAKRAPY) lie on the Cytoplasmic side of the membrane. The helical transmembrane segment at 252 to 272 (FSSLLIGLVGVYMGVHGFMGI) threads the bilayer. Residues 273 to 274 (MR) lie on the Periplasmic side of the membrane.

Belongs to the NiCoT transporter (TC 2.A.52) family. RcnA subfamily.

It localises to the cell inner membrane. In terms of biological role, efflux system for nickel and cobalt. In Escherichia coli (strain K12), this protein is Nickel/cobalt efflux system RcnA (rcnA).